The chain runs to 328 residues: Probable transcription factor At4g00610 (328 aa).

Residues 31–143 (AKNKTLVTPS…ERAKTETETG (113 aa)) are disordered. Polar residues predominate over residues 35–54 (TLVTPSTVKKSSDVASTSKK). The segment covering 84 to 108 (SEEEEEDEPSSDSESGSESESDTEA) has biased composition (acidic residues). A compositionally biased stretch (basic and acidic residues) spans 122 to 143 (NEKRQSEGKPEEERAKTETETG).

This sequence belongs to the GeBP family.

In Arabidopsis thaliana (Mouse-ear cress), this protein is Probable transcription factor At4g00610.